A 335-amino-acid chain; its full sequence is Deoxyhypusine hydroxylase (335 aa).

HEAT-like PBS-type repeat units follow at residues 71–97 (LKHE…VAKD), 104–130 (CRHE…LRDN), 200–233 (LRYR…GLKD), 238–264 (FRHE…ALSN), and 271–298 (VRHE…FLND). The Fe cation site is built by histidine 73, glutamate 74, histidine 106, and glutamate 107. Fe cation is bound by residues histidine 240, glutamate 241, histidine 273, and glutamate 274.

The protein belongs to the deoxyhypusine hydroxylase family. Requires Fe(2+) as cofactor.

Its subcellular location is the cytoplasm. The protein localises to the nucleus. The catalysed reaction is [eIF5A protein]-deoxyhypusine + AH2 + O2 = [eIF5A protein]-hypusine + A + H2O. Its pathway is protein modification; eIF5A hypusination. Its function is as follows. Catalyzes the hydroxylation of the N(6)-(4-aminobutyl)-L-lysine intermediate to form hypusine, an essential post-translational modification only found in mature eIF-5A factor. The protein is Deoxyhypusine hydroxylase (lia1) of Aspergillus fumigatus (strain ATCC MYA-4609 / CBS 101355 / FGSC A1100 / Af293) (Neosartorya fumigata).